The chain runs to 469 residues: ATP synthase subunit beta (469 aa).

Position 155–162 (155–162) interacts with ATP; the sequence is GGAGVGKT.

It belongs to the ATPase alpha/beta chains family. As to quaternary structure, F-type ATPases have 2 components, CF(1) - the catalytic core - and CF(0) - the membrane proton channel. CF(1) has five subunits: alpha(3), beta(3), gamma(1), delta(1), epsilon(1). CF(0) has three main subunits: a(1), b(2) and c(9-12). The alpha and beta chains form an alternating ring which encloses part of the gamma chain. CF(1) is attached to CF(0) by a central stalk formed by the gamma and epsilon chains, while a peripheral stalk is formed by the delta and b chains.

The protein localises to the cell inner membrane. It catalyses the reaction ATP + H2O + 4 H(+)(in) = ADP + phosphate + 5 H(+)(out). Produces ATP from ADP in the presence of a proton gradient across the membrane. The catalytic sites are hosted primarily by the beta subunits. This Thermosipho melanesiensis (strain DSM 12029 / CIP 104789 / BI429) protein is ATP synthase subunit beta.